Reading from the N-terminus, the 434-residue chain is GTPase Der (434 aa).

EngA-type G domains lie at 3–167 (NIVA…PEIE) and 175–350 (PRFA…ESRS). GTP-binding positions include 9-16 (GRPNVGKS), 56-60 (DTGGY), 119-122 (NKVD), 181-188 (GRPNAGKS), 228-232 (DTAGI), and 293-296 (NKWD). The KH-like domain maps to 351–434 (KKIKTRQFND…VPISIFFRKK (84 aa)).

The protein belongs to the TRAFAC class TrmE-Era-EngA-EngB-Septin-like GTPase superfamily. EngA (Der) GTPase family. Associates with the 50S ribosomal subunit.

In terms of biological role, GTPase that plays an essential role in the late steps of ribosome biogenesis. In Christiangramia forsetii (strain DSM 17595 / CGMCC 1.15422 / KT0803) (Gramella forsetii), this protein is GTPase Der.